Consider the following 61-residue polypeptide: Protein YncO (61 aa).

A helical membrane pass occupies residues 18–38 (HVFLYVFYIFLFLVLFIMTIY).

It is found in the cell inner membrane. The chain is Protein YncO from Escherichia coli (strain K12).